Here is a 510-residue protein sequence, read N- to C-terminus: Abscisic acid 8'-hydroxylase 2 (510 aa).

Residues 3 to 23 form a helical membrane-spanning segment; the sequence is FLLFFVFVTAAVLCFVVPAFL. A heme-binding site is contributed by cysteine 441.

It belongs to the cytochrome P450 family. Heme serves as cofactor.

Its subcellular location is the membrane. The enzyme catalyses 2-cis-(+)-abscisate + reduced [NADPH--hemoprotein reductase] + O2 = (+)-8'-hydroxyabscisate + oxidized [NADPH--hemoprotein reductase] + H2O + H(+). The protein operates within plant hormone degradation; abscisic acid degradation. Functionally, involved in the oxidative degradation of abscisic acid. The protein is Abscisic acid 8'-hydroxylase 2 (CYP707A6) of Oryza sativa subsp. japonica (Rice).